A 175-amino-acid chain; its full sequence is DPY30 domain-containing protein 1 (175 aa).

Over residues 94 to 112 the composition is skewed to basic and acidic residues; the sequence is QQKEKQKSEDFETGQEKSF. Disordered stretches follow at residues 94-134 and 152-175; these read QQKE…QAEE and APNLSRVEELDEPMLSDNGVSAPP.

It belongs to the dpy-30 family. In terms of assembly, component of the axonemal radial spoke complex 1 (RS1), at least composed of spoke head proteins RSPH1, RSPH3, RSPH9 and the cilia-specific component RSPH4A or sperm-specific component RSPH6A, spoke stalk proteins RSPH14, DNAJB13, DYDC1, ROPN1L and NME5, and the anchor protein IQUB. Interacts with SH3GL3.

The protein localises to the cytoplasm. It is found in the cytoskeleton. Its subcellular location is the flagellum axoneme. Its function is as follows. Functions as part of axonemal radial spoke complexes that play an important part in the motility of sperm and cilia. Plays a crucial role during acrosome biogenesis. The sequence is that of DPY30 domain-containing protein 1 (Dydc1) from Mus musculus (Mouse).